A 507-amino-acid chain; its full sequence is Serine hydroxymethyltransferase (507 aa).

At K283 the chain carries N6-(pyridoxal phosphate)lysine.

This sequence belongs to the SHMT family. In terms of assembly, homotetramer. Pyridoxal 5'-phosphate serves as cofactor.

It catalyses the reaction (6R)-5,10-methylene-5,6,7,8-tetrahydrofolate + glycine + H2O = (6S)-5,6,7,8-tetrahydrofolate + L-serine. Its pathway is one-carbon metabolism; tetrahydrofolate interconversion. Its function is as follows. Interconversion of serine and glycine. The chain is Serine hydroxymethyltransferase (mel-32) from Caenorhabditis elegans.